The primary structure comprises 439 residues: Type I secretion system membrane fusion protein PrsE (439 aa).

The chain crosses the membrane as a helical span at residues 20 to 40; the sequence is LIGVSVLALALVAGVGGWAAT.

The protein belongs to the membrane fusion protein (MFP) (TC 8.A.1) family. In terms of assembly, part of a type I secretion system composed of PrsD and PrsE.

The protein localises to the cell inner membrane. Mediates secretion of glycanase ExsH. This is Type I secretion system membrane fusion protein PrsE (prsE) from Rhizobium meliloti (strain 1021) (Ensifer meliloti).